The sequence spans 252 residues: Small ribosomal subunit protein uS3 (252 aa).

The KH type-2 domain maps to 38 to 106; sequence IRKYIHARLS…EVQINIFEIK (69 aa). Residues 214–252 form a disordered region; that stretch reads PLAGMDKKQSGTGGGKGGDAPRGKSNFNKGGKPDARKRK. A compositionally biased stretch (gly residues) spans 224-233; sequence GTGGGKGGDA.

The protein belongs to the universal ribosomal protein uS3 family. As to quaternary structure, part of the 30S ribosomal subunit. Forms a tight complex with proteins S10 and S14.

Its function is as follows. Binds the lower part of the 30S subunit head. Binds mRNA in the 70S ribosome, positioning it for translation. This chain is Small ribosomal subunit protein uS3, found in Flavobacterium johnsoniae (strain ATCC 17061 / DSM 2064 / JCM 8514 / BCRC 14874 / CCUG 350202 / NBRC 14942 / NCIMB 11054 / UW101) (Cytophaga johnsonae).